The following is a 219-amino-acid chain: Cytidylate kinase (219 aa).

An ATP-binding site is contributed by 21–29; sequence GPAASGKGT.

The protein belongs to the cytidylate kinase family. Type 1 subfamily.

Its subcellular location is the cytoplasm. The catalysed reaction is CMP + ATP = CDP + ADP. It catalyses the reaction dCMP + ATP = dCDP + ADP. This chain is Cytidylate kinase, found in Rickettsia felis (strain ATCC VR-1525 / URRWXCal2) (Rickettsia azadi).